The sequence spans 382 residues: NADH-ubiquinone oxidoreductase chain 2 (382 aa).

Transmembrane regions (helical) follow at residues 1-21, 33-53, 54-74, 88-108, 123-143, 158-178, 188-208, 212-232, 239-259, 260-280, 284-304, and 305-325; these read MIELDLCFGLLLLILFGLLSL, FICQCWLVMITPLEVQDFALC, ILTVVLLQSFHSFEALLFLLL, LVSFYVCLEAQTLCVVVLCGL, LKFLLLSAMVSGMALFWFSAM, FWILLVMLFKLGVAPMHMWSV, LLLYLSTAPKLSLFTFWASSW, FSVGVFILFSMFIGSIGAYGQ, FAYSTINEIGLLLLAVETAGF, HTLYQHLGIYIITQLLLWNLT, LFALCAVSLAGLPPFAGFFGK, and AWIFWHAMSVQAFSLLAAALF.

Belongs to the complex I subunit 2 family.

Its subcellular location is the mitochondrion inner membrane. The enzyme catalyses a ubiquinone + NADH + 5 H(+)(in) = a ubiquinol + NAD(+) + 4 H(+)(out). In terms of biological role, core subunit of the mitochondrial membrane respiratory chain NADH dehydrogenase (Complex I) that is believed to belong to the minimal assembly required for catalysis. Complex I functions in the transfer of electrons from NADH to the respiratory chain. The immediate electron acceptor for the enzyme is believed to be ubiquinone. This Chlamydomonas reinhardtii (Chlamydomonas smithii) protein is NADH-ubiquinone oxidoreductase chain 2 (ND2).